A 181-amino-acid chain; its full sequence is TATA-box-binding protein (181 aa).

Tandem repeats lie at residues 7-83 (IVNV…IKEL) and 98-173 (VQNM…LTTL).

It belongs to the TBP family.

In terms of biological role, general factor that plays a role in the activation of archaeal genes transcribed by RNA polymerase. Binds specifically to the TATA box promoter element which lies close to the position of transcription initiation. The polypeptide is TATA-box-binding protein (Methanococcus maripaludis (strain C7 / ATCC BAA-1331)).